Reading from the N-terminus, the 420-residue chain is Tryptophan synthase beta chain (420 aa).

Lysine 100 is subject to N6-(pyridoxal phosphate)lysine.

Belongs to the TrpB family. As to quaternary structure, tetramer of two alpha and two beta chains. It depends on pyridoxal 5'-phosphate as a cofactor.

It carries out the reaction (1S,2R)-1-C-(indol-3-yl)glycerol 3-phosphate + L-serine = D-glyceraldehyde 3-phosphate + L-tryptophan + H2O. Its pathway is amino-acid biosynthesis; L-tryptophan biosynthesis; L-tryptophan from chorismate: step 5/5. Functionally, the beta subunit is responsible for the synthesis of L-tryptophan from indole and L-serine. The protein is Tryptophan synthase beta chain of Pyrobaculum islandicum (strain DSM 4184 / JCM 9189 / GEO3).